Consider the following 123-residue polypeptide: Large ribosomal subunit protein uL14c (123 aa).

Belongs to the universal ribosomal protein uL14 family. Part of the 50S ribosomal subunit.

The protein resides in the plastid. The protein localises to the chloroplast. Binds to 23S rRNA. This chain is Large ribosomal subunit protein uL14c, found in Lolium perenne (Perennial ryegrass).